A 201-amino-acid chain; its full sequence is 3-isopropylmalate dehydratase small subunit (201 aa).

This sequence belongs to the LeuD family. LeuD type 1 subfamily. Heterodimer of LeuC and LeuD.

It carries out the reaction (2R,3S)-3-isopropylmalate = (2S)-2-isopropylmalate. It participates in amino-acid biosynthesis; L-leucine biosynthesis; L-leucine from 3-methyl-2-oxobutanoate: step 2/4. In terms of biological role, catalyzes the isomerization between 2-isopropylmalate and 3-isopropylmalate, via the formation of 2-isopropylmaleate. The polypeptide is 3-isopropylmalate dehydratase small subunit (Shewanella frigidimarina (strain NCIMB 400)).